Consider the following 129-residue polypeptide: Small ribosomal subunit protein uS11 (129 aa).

The protein belongs to the universal ribosomal protein uS11 family. As to quaternary structure, part of the 30S ribosomal subunit. Interacts with proteins S7 and S18. Binds to IF-3.

In terms of biological role, located on the platform of the 30S subunit, it bridges several disparate RNA helices of the 16S rRNA. Forms part of the Shine-Dalgarno cleft in the 70S ribosome. The polypeptide is Small ribosomal subunit protein uS11 (Nitrosomonas eutropha (strain DSM 101675 / C91 / Nm57)).